A 274-amino-acid chain; its full sequence is 4-diphosphocytidyl-2-C-methyl-D-erythritol kinase (274 aa).

Lys-14 is a catalytic residue. Pro-94–Ser-104 contributes to the ATP binding site. The active site involves Asp-134.

It belongs to the GHMP kinase family. IspE subfamily.

The catalysed reaction is 4-CDP-2-C-methyl-D-erythritol + ATP = 4-CDP-2-C-methyl-D-erythritol 2-phosphate + ADP + H(+). It functions in the pathway isoprenoid biosynthesis; isopentenyl diphosphate biosynthesis via DXP pathway; isopentenyl diphosphate from 1-deoxy-D-xylulose 5-phosphate: step 3/6. Functionally, catalyzes the phosphorylation of the position 2 hydroxy group of 4-diphosphocytidyl-2C-methyl-D-erythritol. This chain is 4-diphosphocytidyl-2-C-methyl-D-erythritol kinase, found in Thermosipho melanesiensis (strain DSM 12029 / CIP 104789 / BI429).